We begin with the raw amino-acid sequence, 473 residues long: Photosystem II CP43 reaction center protein (473 aa).

A propeptide spanning residues 1 to 14 is cleaved from the precursor; sequence MKTLYSLRRFYHVE. Residue threonine 15 is modified to N-acetylthreonine. Residue threonine 15 is modified to Phosphothreonine. The next 5 membrane-spanning stretches (helical) occupy residues 69–93, 134–155, 178–200, 255–275, and 291–312; these read LFEV…PHLA, LLGP…KDRN, KALY…RKIT, KPFA…LSYS, and WFNN…ASQA. Position 367 (glutamate 367) interacts with [CaMn4O5] cluster. A helical transmembrane segment spans residues 447–471; that stretch reads RARAAAAGFEKGIDRDFEPVLSMTP.

Belongs to the PsbB/PsbC family. PsbC subfamily. As to quaternary structure, PSII is composed of 1 copy each of membrane proteins PsbA, PsbB, PsbC, PsbD, PsbE, PsbF, PsbH, PsbI, PsbJ, PsbK, PsbL, PsbM, PsbT, PsbX, PsbY, PsbZ, Psb30/Ycf12, at least 3 peripheral proteins of the oxygen-evolving complex and a large number of cofactors. It forms dimeric complexes. It depends on Binds multiple chlorophylls and provides some of the ligands for the Ca-4Mn-5O cluster of the oxygen-evolving complex. It may also provide a ligand for a Cl- that is required for oxygen evolution. PSII binds additional chlorophylls, carotenoids and specific lipids. as a cofactor.

The protein resides in the plastid. It localises to the chloroplast thylakoid membrane. Functionally, one of the components of the core complex of photosystem II (PSII). It binds chlorophyll and helps catalyze the primary light-induced photochemical processes of PSII. PSII is a light-driven water:plastoquinone oxidoreductase, using light energy to abstract electrons from H(2)O, generating O(2) and a proton gradient subsequently used for ATP formation. This Arabis hirsuta (Hairy rock-cress) protein is Photosystem II CP43 reaction center protein.